A 93-amino-acid polypeptide reads, in one-letter code: UPF0250 protein PSPA7_1111 (93 aa).

The protein belongs to the UPF0250 family.

The protein is UPF0250 protein PSPA7_1111 of Pseudomonas paraeruginosa (strain DSM 24068 / PA7) (Pseudomonas aeruginosa (strain PA7)).